A 566-amino-acid chain; its full sequence is Mannitol 2-dehydrogenase (566 aa).

106 to 117 (IVHVGVGGFHRA) contacts NAD(+).

The protein belongs to the mannitol dehydrogenase family. In terms of assembly, monomer.

The catalysed reaction is D-mannitol + NAD(+) = D-fructose + NADH + H(+). In terms of biological role, catalyzes the NAD(H)-dependent interconversion of D-fructose and D-mannitol in the mannitol metabolic pathway. This chain is Mannitol 2-dehydrogenase, found in Pyrenophora tritici-repentis (strain Pt-1C-BFP) (Wheat tan spot fungus).